A 396-amino-acid chain; its full sequence is Diels-Alderase mpsD (396 aa).

The protein belongs to the Diels-Alderase family.

It participates in secondary metabolite biosynthesis. In terms of biological role, diels-Alderase; part of the gene cluster that mediates the biosynthesis of macrophasetins, 3-decalinoyltetramic acids (DTAs) which feature a tetramate (pyrrolidine-2,4-dione) unit connected to a decalin fragment and that have potent bioactivities. The PKS-NRPS mpsA together with its associated enoylreductase partner mpsG incorporate one unit of acetyl-CoA, seven units of malonyl-CoA, and one unit of L-alanine to assemble the linear tetramic acid intermediate corresponding to the backbone of macrophasetins. Without the Diels-Alderase mpsD, the mpsA/G product can undergo the non-enzymatic intramolecular Diels-Alder (IMDA) reaction to generate both macrophasetin A and macrophasetin B. Catalyzed by mpsD, the linear tetramic acid intermediate is thoroughly converted to macrophasetin A via the endo-IMDA reaction in a regioselective and stereoselective manner. Finally, the cytochrome P450 monooxygenase mpsF catalyzes the hydroxylation at C20 to yield the end product macrophasetin C. This Macrophomina phaseolina (strain MS6) (Charcoal rot fungus) protein is Diels-Alderase mpsD.